Reading from the N-terminus, the 104-residue chain is Small ribosomal subunit protein uS10 (104 aa).

This sequence belongs to the universal ribosomal protein uS10 family. As to quaternary structure, part of the 30S ribosomal subunit.

Functionally, involved in the binding of tRNA to the ribosomes. The polypeptide is Small ribosomal subunit protein uS10 (Alkaliphilus oremlandii (strain OhILAs) (Clostridium oremlandii (strain OhILAs))).